A 451-amino-acid chain; its full sequence is MNYEVYCGNAHAEPNSSAVQQLAEACVEQDASYFDGCSRTCVKDKYLLPLTQFDNLEIVVYGQIFPILVLFAVFANAAVALVLSKKHMITPTNVVLKYMAIAELLVGLVPLPWTLFFFSMGNIKETHRLELWWCYLQKYSMDAFPPVFHMIAMWLTVLLAAQRYVSISHPLHSRSACNVKNVRLATMIITVTSFLCGLPKSFDYEYETVHGWIYSHGNWTYASSCVMMPTAILTNMGQTVYFNIYFWTRALGFIILPSFLLVLLNGLLIKGIRRAQRRKLRLLREKRSEEAARQRDSNSTSLMLVAIVSIFLIVNLPQAIFMGLLCVCETFTIKIPILEGTFPAVFLIASNMIVIATYPINFGIYCFMSSSFRQTFKLLFCPGASQLQCERRIEAASAVHSSRRRSDICSHLVNVCTNSEGFMQVSHHCLHVDYLVSDRQSTQFTTMDRSD.

Topologically, residues 1-63 (MNYEVYCGNA…DNLEIVVYGQ (63 aa)) are extracellular. N-linked (GlcNAc...) asparagine glycosylation is present at asparagine 15. The chain crosses the membrane as a helical span at residues 64-84 (IFPILVLFAVFANAAVALVLS). Residues 85 to 97 (KKHMITPTNVVLK) lie on the Cytoplasmic side of the membrane. A helical transmembrane segment spans residues 98 to 118 (YMAIAELLVGLVPLPWTLFFF). Topologically, residues 119 to 140 (SMGNIKETHRLELWWCYLQKYS) are extracellular. Cysteine 134 and cysteine 225 are joined by a disulfide. The helical transmembrane segment at 141-161 (MDAFPPVFHMIAMWLTVLLAA) threads the bilayer. Residues 162–183 (QRYVSISHPLHSRSACNVKNVR) lie on the Cytoplasmic side of the membrane. The chain crosses the membrane as a helical span at residues 184–204 (LATMIITVTSFLCGLPKSFDY). The Extracellular segment spans residues 205–251 (EYETVHGWIYSHGNWTYASSCVMMPTAILTNMGQTVYFNIYFWTRAL). A glycan (N-linked (GlcNAc...) asparagine) is linked at asparagine 218. The chain crosses the membrane as a helical span at residues 252–272 (GFIILPSFLLVLLNGLLIKGI). Residues 273–301 (RRAQRRKLRLLREKRSEEAARQRDSNSTS) lie on the Cytoplasmic side of the membrane. The helical transmembrane segment at 302-322 (LMLVAIVSIFLIVNLPQAIFM) threads the bilayer. At 323-334 (GLLCVCETFTIK) the chain is on the extracellular side. The chain crosses the membrane as a helical span at residues 335–355 (IPILEGTFPAVFLIASNMIVI). The Cytoplasmic portion of the chain corresponds to 356–451 (ATYPINFGIY…TQFTTMDRSD (96 aa)).

The protein belongs to the G-protein coupled receptor 1 family. As to expression, expressed in head neurons including the ASE sensory neurons and the ASI and AWB chemosensory neurons, the midbody neurons SDQ, and motor neurons in the tail.

Its subcellular location is the cell membrane. G-protein coupled receptor for the neuropeptide like protein nlp-38. Plays a role in several types of aversive gustatory associative learning including gustatory plasticity and salt avoidance learning. Its role in salt avoidance learning may be through activation of the transcription factor crh-1/CREB and de novo transcription and translation, which in turn promotes the formation of long-term memory. The protein is Sex peptide receptor-related protein 2 of Caenorhabditis elegans.